A 321-amino-acid polypeptide reads, in one-letter code: MPVKIPDNLPAAEILESENIFVMSETRAANQDIRPMKVLILNLMPNKIETETQLLRLLGNTPLQVDVDLLRIHDKVSKHTSIDHMNNFYRDFEAVRHKNYDGLIITGAPLGQIEFEEVTYWDHIREIIDWSQHHVTSVLFLCWAAHAALYHLYGLQRKLLSAKRSGVFNHQRTHKHFPLLRGFDDEFFAPHSRFAEMEVADLKAHKELQVLAESDEAGAYLVLSRNNRNLFVMGHPEYQKSTLKDEYQRDLAEGLNPRVPKNYFRGDDPSQAPVARWHGHGSLLVSNWLNYYVYQLTPYDLHDMSAITPWEHEYKDAEDND.

The active-site Acyl-thioester intermediate is Cys142. Residues Lys163 and Ser192 each coordinate substrate. The Proton acceptor role is filled by His235. Glu237 is a catalytic residue. A substrate-binding site is contributed by Arg249.

It belongs to the MetA family.

It is found in the cytoplasm. It catalyses the reaction L-homoserine + succinyl-CoA = O-succinyl-L-homoserine + CoA. The protein operates within amino-acid biosynthesis; L-methionine biosynthesis via de novo pathway; O-succinyl-L-homoserine from L-homoserine: step 1/1. Its function is as follows. Transfers a succinyl group from succinyl-CoA to L-homoserine, forming succinyl-L-homoserine. This is Homoserine O-succinyltransferase from Shewanella loihica (strain ATCC BAA-1088 / PV-4).